A 419-amino-acid polypeptide reads, in one-letter code: Multifunctional CCA protein (419 aa).

ATP is bound by residues Gly8 and Arg11. 2 residues coordinate CTP: Gly8 and Arg11. Positions 21 and 23 each coordinate Mg(2+). Arg91, Arg149, and Arg152 together coordinate ATP. CTP is bound by residues Arg91, Arg149, and Arg152. In terms of domain architecture, HD spans 238-339; sequence CGVHLMMVID…VRLLERCDAF (102 aa).

The protein belongs to the tRNA nucleotidyltransferase/poly(A) polymerase family. Bacterial CCA-adding enzyme type 1 subfamily. Monomer. Can also form homodimers and oligomers. It depends on Mg(2+) as a cofactor. Requires Ni(2+) as cofactor.

It catalyses the reaction a tRNA precursor + 2 CTP + ATP = a tRNA with a 3' CCA end + 3 diphosphate. The enzyme catalyses a tRNA with a 3' CCA end + 2 CTP + ATP = a tRNA with a 3' CCACCA end + 3 diphosphate. Its function is as follows. Catalyzes the addition and repair of the essential 3'-terminal CCA sequence in tRNAs without using a nucleic acid template. Adds these three nucleotides in the order of C, C, and A to the tRNA nucleotide-73, using CTP and ATP as substrates and producing inorganic pyrophosphate. tRNA 3'-terminal CCA addition is required both for tRNA processing and repair. Also involved in tRNA surveillance by mediating tandem CCA addition to generate a CCACCA at the 3' terminus of unstable tRNAs. While stable tRNAs receive only 3'-terminal CCA, unstable tRNAs are marked with CCACCA and rapidly degraded. The sequence is that of Multifunctional CCA protein from Variovorax paradoxus (strain S110).